The sequence spans 144 residues: Grifin (144 aa).

Residues 5 to 133 form the Galectin domain; it reads FEAFCAGGLA…EHRLAQVELA (129 aa). Serine 138 bears the Phosphoserine mark.

Homodimer.

The protein is Grifin (Grifin) of Mus musculus (Mouse).